We begin with the raw amino-acid sequence, 513 residues long: Flavonoid 3'-monooxygenase (513 aa).

A helical transmembrane segment spans residues 1–21; the sequence is MATLFLTILLATVLFLILRIF. The Cytoplasmic portion of the chain corresponds to 22–513; that stretch reads SHRRNRSHNN…APNVYGLGSG (492 aa). Position 445 (Cys-445) interacts with heme.

Belongs to the cytochrome P450 family. Requires heme as cofactor. In terms of tissue distribution, high expression in siliques and to a lower extent in stems, flowers and senescing leaves.

It is found in the endoplasmic reticulum membrane. The catalysed reaction is a 3'-unsubstituted flavone + reduced [NADPH--hemoprotein reductase] + O2 = a 3'-hydroxyflavone + oxidized [NADPH--hemoprotein reductase] + H2O + H(+). It participates in secondary metabolite biosynthesis; flavonoid biosynthesis. In terms of biological role, catalyzes the 3'-hydroxylation of the flavonoid B-ring to the 3',4'-hydroxylated state. Convert naringenin to eriodictyol and dihydrokaempferol to dihydroquercetin. The polypeptide is Flavonoid 3'-monooxygenase (CYP75B1) (Arabidopsis thaliana (Mouse-ear cress)).